We begin with the raw amino-acid sequence, 286 residues long: NADPH-dependent 7-cyano-7-deazaguanine reductase (286 aa).

88 to 90 (VES) lines the substrate pocket. Residue 90–91 (SK) participates in NADPH binding. The active-site Thioimide intermediate is the cysteine 194. Aspartate 201 acts as the Proton donor in catalysis. 233–234 (HE) is a binding site for substrate. 262–263 (RG) serves as a coordination point for NADPH.

This sequence belongs to the GTP cyclohydrolase I family. QueF type 2 subfamily. As to quaternary structure, homodimer.

The protein localises to the cytoplasm. The enzyme catalyses 7-aminomethyl-7-carbaguanine + 2 NADP(+) = 7-cyano-7-deazaguanine + 2 NADPH + 3 H(+). The protein operates within tRNA modification; tRNA-queuosine biosynthesis. In terms of biological role, catalyzes the NADPH-dependent reduction of 7-cyano-7-deazaguanine (preQ0) to 7-aminomethyl-7-deazaguanine (preQ1). This Colwellia psychrerythraea (strain 34H / ATCC BAA-681) (Vibrio psychroerythus) protein is NADPH-dependent 7-cyano-7-deazaguanine reductase.